A 451-amino-acid chain; its full sequence is tRNA-2-methylthio-N(6)-dimethylallyladenosine synthase (451 aa).

An MTTase N-terminal domain is found at 3 to 120 (LKLHIKTYGC…LPEMINHVRI (118 aa)). The [4Fe-4S] cluster site is built by C12, C49, C83, C157, C161, and C164. A Radical SAM core domain is found at 143-375 (QAKGPTAFVS…QECIRKQAMK (233 aa)). Residues 378-441 (QAMKGTVQCI…SNSLRGELIS (64 aa)) form the TRAM domain.

It belongs to the methylthiotransferase family. MiaB subfamily. As to quaternary structure, monomer. [4Fe-4S] cluster is required as a cofactor.

It localises to the cytoplasm. It carries out the reaction N(6)-dimethylallyladenosine(37) in tRNA + (sulfur carrier)-SH + AH2 + 2 S-adenosyl-L-methionine = 2-methylsulfanyl-N(6)-dimethylallyladenosine(37) in tRNA + (sulfur carrier)-H + 5'-deoxyadenosine + L-methionine + A + S-adenosyl-L-homocysteine + 2 H(+). Catalyzes the methylthiolation of N6-(dimethylallyl)adenosine (i(6)A), leading to the formation of 2-methylthio-N6-(dimethylallyl)adenosine (ms(2)i(6)A) at position 37 in tRNAs that read codons beginning with uridine. This Baumannia cicadellinicola subsp. Homalodisca coagulata protein is tRNA-2-methylthio-N(6)-dimethylallyladenosine synthase.